The primary structure comprises 155 residues: Microsomal glutathione S-transferase 1 (155 aa).

Over 3–9 the chain is Lumenal; it reads DLTELMK. A helical transmembrane segment spans residues 10–33; it reads NEVFMAFASYATIVLSKMMFMSTA. Over 34–62 the chain is Cytoplasmic; sequence TAFYRLTRKVFANPEDCSSFGKGENAKKY. Glutathione is bound at residue Arg38. N6-acetyllysine is present on residues Lys42, Lys55, and Lys60. A helical transmembrane segment spans residues 63–96; sequence LRTDERVERVRRAHLNDLENIVPFLGIGLLYSLS. 4 residues coordinate glutathione: Arg73, Arg74, His76, and Glu81. Over 97–99 the chain is Lumenal; that stretch reads GPD. Residues 100–123 traverse the membrane as a helical segment; that stretch reads LSTAILHFRLFVGARIYHTIAYLT. Position 121 (Tyr121) interacts with glutathione. Topologically, residues 124 to 128 are cytoplasmic; the sequence is PLPQP. Residues 129 to 148 form a helical membrane-spanning segment; that stretch reads NRGLAFFLGYGVTLSMAYRL. Residues 149-155 are Lumenal-facing; the sequence is LKSRLYL.

This sequence belongs to the MAPEG family. Homotrimer; The trimer binds only one molecule of glutathione.

It localises to the endoplasmic reticulum membrane. Its subcellular location is the mitochondrion outer membrane. The enzyme catalyses RX + glutathione = an S-substituted glutathione + a halide anion + H(+). In terms of biological role, conjugation of reduced glutathione to a wide number of exogenous and endogenous hydrophobic electrophiles. This is Microsomal glutathione S-transferase 1 (MGST1) from Sus scrofa (Pig).